The primary structure comprises 411 residues: Arginine deiminase (411 aa).

The Amidino-cysteine intermediate role is filled by Cys-401.

The protein belongs to the arginine deiminase family.

The protein localises to the cytoplasm. The catalysed reaction is L-arginine + H2O = L-citrulline + NH4(+). It participates in amino-acid degradation; L-arginine degradation via ADI pathway; carbamoyl phosphate from L-arginine: step 1/2. The sequence is that of Arginine deiminase from Streptococcus equi subsp. equi (strain 4047).